We begin with the raw amino-acid sequence, 555 residues long: 1,3-beta-glucanosyltransferase GAS2 (555 aa).

The first 24 residues, Met-1–Gly-24, serve as a signal peptide directing secretion. Cys-89 and Cys-118 are joined by a disulfide. Residues Tyr-107, Ser-134–Arg-142, Asn-175, Glu-176, Asp-217, and Arg-222 contribute to the (1,3-beta-D-glucosyl)n site. Residue Glu-176 is the Proton donor of the active site. 6 cysteine pairs are disulfide-bonded: Cys-231-Cys-367, Cys-247-Cys-278, Cys-390-Cys-442, Cys-392-Cys-489, Cys-399-Cys-466, and Cys-419-Cys-424. Glu-275 acts as the Nucleophile in catalysis. Tyr-307 serves as a coordination point for (1,3-beta-D-glucosyl)n. N-linked (GlcNAc...) asparagine glycosylation is present at Asn-498. Residue Asp-531 is the site of GPI-anchor amidated aspartate attachment. The propeptide at Gly-532–Leu-555 is removed in mature form.

This sequence belongs to the glycosyl hydrolase 72 family. N-glycosylated.

The protein localises to the cell membrane. Its function is as follows. Splits internally a 1,3-beta-glucan molecule and transfers the newly generated reducing end (the donor) to the non-reducing end of another 1,3-beta-glucan molecule (the acceptor) forming a 1,3-beta linkage, resulting in the elongation of 1,3-beta-glucan chains in the cell wall. Involved in spore wall assembly. This Saccharomyces cerevisiae (strain ATCC 204508 / S288c) (Baker's yeast) protein is 1,3-beta-glucanosyltransferase GAS2 (GAS2).